The sequence spans 705 residues: Ribosomal RNA large subunit methyltransferase K/L (705 aa).

Residues 43 to 154 (LLYQSLLWSR…RDTASVALDL (112 aa)) form the THUMP domain.

The protein belongs to the methyltransferase superfamily. RlmKL family.

It is found in the cytoplasm. It carries out the reaction guanosine(2445) in 23S rRNA + S-adenosyl-L-methionine = N(2)-methylguanosine(2445) in 23S rRNA + S-adenosyl-L-homocysteine + H(+). The catalysed reaction is guanosine(2069) in 23S rRNA + S-adenosyl-L-methionine = N(2)-methylguanosine(2069) in 23S rRNA + S-adenosyl-L-homocysteine + H(+). Functionally, specifically methylates the guanine in position 2445 (m2G2445) and the guanine in position 2069 (m7G2069) of 23S rRNA. The polypeptide is Ribosomal RNA large subunit methyltransferase K/L (Pectobacterium atrosepticum (strain SCRI 1043 / ATCC BAA-672) (Erwinia carotovora subsp. atroseptica)).